The sequence spans 163 residues: uncharacterized protein (163 aa).

The interval 144-163 (WSHSQSQLGTPGRGKGALGF) is disordered. A compositionally biased stretch (gly residues) spans 154–163 (PGRGKGALGF).

This is an uncharacterized protein from Homo sapiens (Human).